A 1578-amino-acid chain; its full sequence is Mediator of RNA polymerase II transcription subunit 14 (1578 aa).

Residues 49-53 carry the LXXLL motif 1 motif; it reads LAELL. A disordered region spans residues 561 to 582; the sequence is SQSVTAGGTSQSSAPSAATTES. The segment covering 565–580 has biased composition (low complexity); that stretch reads TAGGTSQSSAPSAATT. The LXXLL motif 2 signature appears at 739 to 743; sequence LKRLL. 2 disordered regions span residues 1009-1173 and 1510-1578; these read RRRS…PDHK and APGG…GGPN. Residues 1084 to 1093 are compositionally biased toward polar residues; the sequence is SQSHPNFNMT. 2 stretches are compositionally biased toward pro residues: residues 1095–1104 and 1157–1167; these read PPAPHMPHPS and PGMPRPSPRPG. Composition is skewed to gly residues over residues 1510–1521 and 1547–1578; these read APGGPGGPGPMG and MGGG…GGPN.

Belongs to the Mediator complex subunit 14 family. Component of the Mediator complex.

It localises to the nucleus. Functionally, component of the Mediator complex, a coactivator involved in the regulated transcription of nearly all RNA polymerase II-dependent genes. Mediator functions as a bridge to convey information from gene-specific regulatory proteins to the basal RNA polymerase II transcription machinery. Mediator is recruited to promoters by direct interactions with regulatory proteins and serves as a scaffold for the assembly of a functional preinitiation complex with RNA polymerase II and the general transcription factors. The sequence is that of Mediator of RNA polymerase II transcription subunit 14 (MED14) from Aedes aegypti (Yellowfever mosquito).